A 440-amino-acid chain; its full sequence is Histidinol dehydrogenase homolog 2 (440 aa).

Zn(2+) is bound at residue His-265. Active-site proton acceptor residues include Glu-333 and His-334. Position 426 (His-426) interacts with Zn(2+).

This sequence belongs to the histidinol dehydrogenase family. It depends on Zn(2+) as a cofactor.

The sequence is that of Histidinol dehydrogenase homolog 2 from Mesorhizobium japonicum (strain LMG 29417 / CECT 9101 / MAFF 303099) (Mesorhizobium loti (strain MAFF 303099)).